The following is a 200-amino-acid chain: Cuticle protein 21.3 (200 aa).

Tandem repeats lie at residues 98 to 101 (AAPA), 104 to 107 (AAPA), 116 to 119 (AAPA), 121 to 124 (AAPA), 133 to 136 (AAPA), 154 to 157 (AAPA), 166 to 169 (AAPA), 178 to 181 (AAPA), 184 to 187 (AAPA), and 196 to 199 (AAPA).

In terms of biological role, component of the cuticle of migratory locust which contains more than 100 different structural proteins. This Locusta migratoria (Migratory locust) protein is Cuticle protein 21.3.